A 259-amino-acid polypeptide reads, in one-letter code: UPF0246 protein PFLU_0992 (259 aa).

It belongs to the UPF0246 family.

In Pseudomonas fluorescens (strain SBW25), this protein is UPF0246 protein PFLU_0992.